The primary structure comprises 137 residues: Large ribosomal subunit protein uL16 (137 aa).

The protein belongs to the universal ribosomal protein uL16 family. In terms of assembly, part of the 50S ribosomal subunit.

In terms of biological role, binds 23S rRNA and is also seen to make contacts with the A and possibly P site tRNAs. The protein is Large ribosomal subunit protein uL16 of Bartonella quintana (strain Toulouse) (Rochalimaea quintana).